A 159-amino-acid chain; its full sequence is Probable NADH dehydrogenase [ubiquinone] 1 alpha subcomplex subunit 12 (159 aa).

Belongs to the complex I NDUFA12 subunit family. As to quaternary structure, complex I is composed of at least 49 different subunits.

Its subcellular location is the mitochondrion inner membrane. Functionally, accessory subunit of the mitochondrial membrane respiratory chain NADH dehydrogenase (Complex I), that is believed not to be involved in catalysis. Complex I functions in the transfer of electrons from NADH to the respiratory chain. The immediate electron acceptor for the enzyme is believed to be ubiquinone. The chain is Probable NADH dehydrogenase [ubiquinone] 1 alpha subcomplex subunit 12 from Arabidopsis thaliana (Mouse-ear cress).